We begin with the raw amino-acid sequence, 606 residues long: Urocanate reductase (606 aa).

Residues 1–40 (MSNLSRRNFITGGAIAALGGTLAIAGCAPKGESSSTVAGA) constitute a signal peptide (tat-type signal). FMN phosphoryl threonine is present on Thr111. 8 residues coordinate FAD: Ala163, Glu182, Thr191, Gly195, Gly196, Ala197, Ala305, and Asp373. Arg433 acts as the Proton donor in catalysis. The FAD site is built by Glu572 and Ile588.

Belongs to the FAD-dependent oxidoreductase 2 family. FRD/SDH subfamily. FAD serves as cofactor. FMN is required as a cofactor. In terms of processing, predicted to be exported by the Tat system. The position of the signal peptide cleavage has not been experimentally proven.

It catalyses the reaction dihydrourocanate + A = urocanate + AH2. In terms of biological role, catalyzes the two-electron reduction of urocanate to dihydrourocanate (also named imidazole propionate or deamino-histidine). Dihydrourocanate is present at higher concentrations in subjects with type 2 diabetes, and directly impairs glucose tolerance and insulin signaling at the level of insulin receptor substrate (IRS) through activation of p38 gamma (MAPK12)-p62-mTORC1. Therefore, the UrdA enzyme from the gut bacteria E.lenta strain DSM 2243 may contribute to the pathogenesis of type 2 diabetes by producing the microbial metabolite dihydrourocanate. This is Urocanate reductase from Eggerthella lenta (strain ATCC 25559 / DSM 2243 / CCUG 17323 / JCM 9979 / KCTC 3265 / NCTC 11813 / VPI 0255 / 1899 B) (Eubacterium lentum).